Consider the following 573-residue polypeptide: Putative ferric-chelate reductase 1 (573 aa).

A helical membrane pass occupies residues 4-24; the sequence is VCKSPQRLLFVLVSCFGLVQS. One can recognise a Reelin domain in the interval 15–181; it reads LVSCFGLVQS…GTTGTSTTPA (167 aa). The 116-residue stretch at 213 to 328 folds into the DOMON domain; the sequence is GCYFVAVQAS…NEYYLMIAAG (116 aa). Residues asparagine 286 and asparagine 300 are each glycosylated (N-linked (GlcNAc...) asparagine). The region spanning 332-532 is the Cytochrome b561 domain; that stretch reads QGNIQFHTNK…YILQDLNLRA (201 aa). The chain crosses the membrane as a helical span at residues 369 to 389; the sequence is AHGCLMLISWMATGSIGMIIA. Residues histidine 370 and histidine 411 each contribute to the heme b site. The next 2 membrane-spanning stretches (helical) occupy residues 414 to 434 and 441 to 461; these read LMTLSIIATAIAFIIVFVSAG and HPVLGCLVMILSLIQPIVAAF. 2 residues coordinate heme b: histidine 441 and histidine 477. 3 helical membrane passes run 479-499, 506-526, and 550-570; these read CNAFAIKCLAVAAIFTGLALF, GWMLKVMGGYLAWEALMYILQ, and ILLFLFIIGNLAFLIALLVGI.

This sequence belongs to the FRRS1 family. Requires heme b as cofactor.

Its subcellular location is the membrane. Functionally, putative ferric-chelate reductases reduce Fe(3+) to Fe(2+) before its transport from the endosome to the cytoplasm. In Danio rerio (Zebrafish), this protein is Putative ferric-chelate reductase 1 (frrs1).